Here is a 132-residue protein sequence, read N- to C-terminus: Holo-[acyl-carrier-protein] synthase (132 aa).

Residues aspartate 8 and glutamate 57 each coordinate Mg(2+).

Belongs to the P-Pant transferase superfamily. AcpS family. Mg(2+) is required as a cofactor.

Its subcellular location is the cytoplasm. It carries out the reaction apo-[ACP] + CoA = holo-[ACP] + adenosine 3',5'-bisphosphate + H(+). In terms of biological role, transfers the 4'-phosphopantetheine moiety from coenzyme A to a Ser of acyl-carrier-protein. The sequence is that of Holo-[acyl-carrier-protein] synthase from Methylobacterium nodulans (strain LMG 21967 / CNCM I-2342 / ORS 2060).